Here is a 315-residue protein sequence, read N- to C-terminus: Peroxidase 1 (315 aa).

The signal sequence occupies residues 1-21 (MASSSYTSLLVLVALVTAASA). Q22 bears the Pyrrolidone carboxylic acid mark. Cystine bridges form between C32–C107, C65–C70, C113–C310, and C193–C219. H63 acts as the Proton acceptor in catalysis. Ca(2+) contacts are provided by D64, V67, G69, D71, and S73. P155 serves as a coordination point for substrate. N158 carries N-linked (GlcNAc...) asparagine glycosylation. H186 is a binding site for heme b. T187 is a Ca(2+) binding site. Positions 234, 237, and 242 each coordinate Ca(2+). N265 is a glycosylation site (N-linked (GlcNAc...) asparagine).

The protein belongs to the peroxidase family. Classical plant (class III) peroxidase subfamily. It depends on Ca(2+) as a cofactor. Heme b serves as cofactor.

Its subcellular location is the secreted. It catalyses the reaction 2 a phenolic donor + H2O2 = 2 a phenolic radical donor + 2 H2O. Removal of H(2)O(2), oxidation of toxic reductants, biosynthesis and degradation of lignin, suberization, auxin catabolism, response to environmental stresses such as wounding, pathogen attack and oxidative stress. These functions might be dependent on each isozyme/isoform in each plant tissue. Its function is as follows. Involved in defense response to powdery meldew fungus. In Hordeum vulgare (Barley), this protein is Peroxidase 1.